The sequence spans 381 residues: E3 ubiquitin-protein ligase At1g63170 (381 aa).

Residues 1–23 (MSRETTTEATPLILTDGGGGRRS) form a disordered region. 2 consecutive transmembrane segments (helical) span residues 74–94 (VVVL…AVLV) and 107–127 (VWII…CVEY). Residues 135–161 (RRDLSPRSSSSSSSSSSSMDEEEGLGL) are disordered. Residues 140–152 (PRSSSSSSSSSSS) show a composition bias toward low complexity. The stretch at 170 to 194 (LELGQLENENNSFAKHLESANTMIS) forms a coiled coil. The next 3 membrane-spanning stretches (helical) occupy residues 189-209 (ANTM…SSGG), 224-244 (IVFL…ACVI), and 245-265 (GIAV…VAEQ). The segment at 325–366 (CCICLSAYEDETELRELPCGHHFHCGCVDKWLYINATCPLCK) adopts an RING-type; atypical zinc-finger fold.

It localises to the membrane. The catalysed reaction is S-ubiquitinyl-[E2 ubiquitin-conjugating enzyme]-L-cysteine + [acceptor protein]-L-lysine = [E2 ubiquitin-conjugating enzyme]-L-cysteine + N(6)-ubiquitinyl-[acceptor protein]-L-lysine.. It participates in protein modification; protein ubiquitination. Mediates E2-dependent protein ubiquitination. In Arabidopsis thaliana (Mouse-ear cress), this protein is E3 ubiquitin-protein ligase At1g63170.